The sequence spans 229 residues: MIDTQQLRAEQLARASDVIRHDDLPFEQPAFIAGADVGFEQEGSVTRAAIAVMRYPSLELVEYKIARISTTMPYIPGFLSFRECPGLLAAWALLEQKPDLLFVDGHGISHPRRLGVASHFGLLVDVPTIGVAKSRLCGRFEPLTESVGSQQPLLDKGEQIGWVWRSKARCNPLFVATGHRVSQDSALHWVQSCMRGYRLPEPTRWADAVASNRPAFVRWQRQQAANVLS.

Positions 36 and 104 each coordinate Mg(2+).

It belongs to the endonuclease V family. Requires Mg(2+) as cofactor.

It is found in the cytoplasm. It catalyses the reaction Endonucleolytic cleavage at apurinic or apyrimidinic sites to products with a 5'-phosphate.. Its function is as follows. DNA repair enzyme involved in the repair of deaminated bases. Selectively cleaves double-stranded DNA at the second phosphodiester bond 3' to a deoxyinosine leaving behind the intact lesion on the nicked DNA. In Pectobacterium carotovorum subsp. carotovorum (strain PC1), this protein is Endonuclease V.